Consider the following 418-residue polypeptide: AP-3 complex subunit mu-2 (418 aa).

The region spanning 176–417 is the MHD domain; sequence NNEAYFDVVE…MTKAGKFQVR (242 aa).

Belongs to the adaptor complexes medium subunit family. Adaptor protein complex 3 (AP-3) is a heterotetramer composed of two large adaptins (delta-type subunit AP3D1 and beta-type subunit AP3B1 or AP3B2), a medium adaptin (mu-type subunit AP3M1 or AP3M2) and a small adaptin (sigma-type subunit APS1 or AP3S2). AP-3 associates with the BLOC-1 complex.

Its subcellular location is the golgi apparatus. The protein localises to the cytoplasmic vesicle membrane. Its function is as follows. Component of the adaptor complexes which link clathrin to receptors in coated vesicles. Clathrin-associated protein complexes are believed to interact with the cytoplasmic tails of membrane proteins, leading to their selection and concentration. Ap47 is a subunit of the plasma membrane adaptor. In concert with the BLOC-1 complex, AP-3 is required to target cargos into vesicles assembled at cell bodies for delivery into neurites and nerve terminals. The protein is AP-3 complex subunit mu-2 (Ap3m2) of Mus musculus (Mouse).